The primary structure comprises 90 residues: Putative F-box protein At5g16285 (90 aa).

The F-box domain occupies 1-46 (MRIESLLQHDVVERILERLAVNSLPRFKAVSKQWKSTIESQFFQGK).

This is Putative F-box protein At5g16285 from Arabidopsis thaliana (Mouse-ear cress).